The chain runs to 113 residues: Iron-sulfur cluster insertion protein ErpA (113 aa).

Iron-sulfur cluster contacts are provided by C41, C105, and C107.

It belongs to the HesB/IscA family. As to quaternary structure, homodimer. Iron-sulfur cluster serves as cofactor.

In terms of biological role, required for insertion of 4Fe-4S clusters for at least IspG. This Actinobacillus succinogenes (strain ATCC 55618 / DSM 22257 / CCUG 43843 / 130Z) protein is Iron-sulfur cluster insertion protein ErpA.